We begin with the raw amino-acid sequence, 347 residues long: Ultraviolet-sensitive opsin (347 aa).

Residues 1 to 37 (MSGEEEFYLFKNGSIGGPWDGPQYHIAPPWAFYLQTA) lie on the Extracellular side of the membrane. Residue Asn12 is glycosylated (N-linked (GlcNAc...) asparagine). The chain crosses the membrane as a helical span at residues 38 to 58 (FMGFVFMVGTPLNAIVLVVTI). Topologically, residues 59–69 (KYKKLRQPLNY) are cytoplasmic. The chain crosses the membrane as a helical span at residues 70–90 (ILVNISFCGFLACIICIFTVF). The Extracellular segment spans residues 91–106 (VSSSQGYFVFGKHVCA). A disulfide bridge connects residues Cys105 and Cys182. A helical transmembrane segment spans residues 107–127 (FEGFMGATAGLVTGWSLAFLA). Residues 128–147 (FERYIVICKPLGNFRFTAKH) are Cytoplasmic-facing. Residues 148-168 (ALVVVVATWVIGIGVAIPPFF) form a helical membrane-spanning segment. Topologically, residues 169–197 (GWSRYVPEGLQCSCGPDWYTVGTKYRSEY) are extracellular. The helical transmembrane segment at 198–218 (YTWFLFIFCFIVPLSLIIFSY) threads the bilayer. Topologically, residues 219–247 (SQLLSALRAVAAQQQESATTQKAEREVSR) are cytoplasmic. Residues 248-268 (MVVVMVGSFCVCYVPYAALAM) form a helical membrane-spanning segment. Residues 269-282 (YMVNNREHGIDLRL) are Extracellular-facing. A helical transmembrane segment spans residues 283 to 303 (VTIPAFFSKSSCVYNPIIYCF). Position 291 is an N6-(retinylidene)lysine (Lys291). Residues 304 to 347 (MNKQFRGCIMEMVCGKPMTDDSDMSSSAQRTEVSSVSSSQVSPS) are Cytoplasmic-facing. Cys317 carries S-palmitoyl cysteine lipidation. Residues 324–347 (DSDMSSSAQRTEVSSVSSSQVSPS) form a disordered region. The segment covering 328–347 (SSSAQRTEVSSVSSSQVSPS) has biased composition (low complexity).

Belongs to the G-protein coupled receptor 1 family. Opsin subfamily. Phosphorylated on some or all of the serine and threonine residues present in the C-terminal region. As to expression, cone photoreceptor cells.

The protein localises to the membrane. In terms of biological role, visual pigments are the light-absorbing molecules that mediate vision. They consist of an apoprotein, opsin, covalently linked to cis-retinal. The protein is Ultraviolet-sensitive opsin of Melopsittacus undulatus (Budgerigar).